A 156-amino-acid chain; its full sequence is Aspartate carbamoyltransferase regulatory chain (156 aa).

Zn(2+)-binding residues include cysteine 110, cysteine 115, cysteine 140, and cysteine 143.

Belongs to the PyrI family. Contains catalytic and regulatory chains. Requires Zn(2+) as cofactor.

Functionally, involved in allosteric regulation of aspartate carbamoyltransferase. The protein is Aspartate carbamoyltransferase regulatory chain of Methanocella arvoryzae (strain DSM 22066 / NBRC 105507 / MRE50).